The chain runs to 83 residues: Small ribosomal subunit protein bS16 (83 aa).

Belongs to the bacterial ribosomal protein bS16 family.

The polypeptide is Small ribosomal subunit protein bS16 (Pseudomonas putida (strain ATCC 700007 / DSM 6899 / JCM 31910 / BCRC 17059 / LMG 24140 / F1)).